The chain runs to 948 residues: PHD finger protein 14 (948 aa).

A disordered region spans residues 22 to 302 (DYDSSDDSDF…LSQSKSNEDS (281 aa)). Phosphoserine occurs at positions 26 and 29. Residues 36–47 (ASDSEGSGNGSE) show a composition bias toward low complexity. Residues 60–71 (DSEENILEEELN) show a composition bias toward acidic residues. Residues 72 to 85 (EDIKVKEEQLKNSA) show a composition bias toward basic and acidic residues. Phosphoserine occurs at positions 84 and 91. Composition is skewed to basic and acidic residues over residues 95–110 (QLIKMEKKEEEENGER) and 117–139 (KEKEKEKEKEKEKEREKEKEKAT). Residues 140-174 (VSENVAASAAATTPATSPPAVNTSPSVPTTTTATE) show a composition bias toward low complexity. At S196 the chain carries Phosphoserine. Acidic residues-rich tracts occupy residues 199–212 (ELNDMDDYDSEDDN) and 233–256 (DGDNEDDEDEGSGSDEDENDEGND). Y206 bears the Phosphotyrosine mark. S208 carries the phosphoserine modification. T287 is modified (phosphothreonine). Over residues 288 to 297 (NDSLTLSQSK) the composition is skewed to polar residues. Residues S290, S294, S298, S302, and S308 each carry the phosphoserine modification. The PHD-type 1 zinc-finger motif lies at 319 to 380 (ILICCVCLGD…PWFCDACKCG (62 aa)). Zn(2+) contacts are provided by C322, C325, C339, C342, H347, and C350. Phosphoserine is present on S359. Positions 374, 377, 385, 388, 405, 408, 441, 444, 458, 463, 468, 471, 495, and 498 each coordinate Zn(2+). The C2HC pre-PHD-type zinc-finger motif lies at 382-415 (SPSCELCPNQDGIFKETDAGRWVHIVCALYVPGV). Residues 439-499 (KECSFCEDPR…PFFAYCKQHA (61 aa)) form a PHD-type 2 zinc finger. At S530 the chain carries Phosphoserine. Positions 630–678 (MIQIQENMAEQKNIKDKLENEQEKLHVEYNKLCESLEELQNLNGKLRSE) form a coiled coil. E648 is covalently cross-linked (Glycyl lysine isopeptide (Lys-Gly) (interchain with G-Cter in SUMO2)). Q651 bears the Phosphoserine mark. A PHD-type 3 zinc finger spans residues 725 to 779 (LYSCGICKKNHDQHLLLLCDTCKLHYHLGCLDPPLTRMPRKTKNSYWQCSECDQA). Residues C728, C731, C743, C746, H751, C754, C773, and C776 each contribute to the Zn(2+) site. Residues S781, S782, and S835 each carry the phosphoserine modification. Residues 811-862 (VPQDVPPEPKKIPIRNTRTRGRKRSFVPEEEKHEERVPRERRQRQSVLQKKP) are disordered. Over residues 836-850 (FVPEEEKHEERVPRE) the composition is skewed to basic and acidic residues. The segment at 868 to 921 (RTECATCKGTGDNENLVRCDECRLCYHFGCLDPPLKKSPKQTGYGWICQECDSS) adopts a PHD-type 4 zinc-finger fold. Zn(2+) is bound by residues C871, C874, C886, C889, H894, C897, C915, and C918. Positions 920-948 (SSSSKEDENEAERKNISQELNMEQKNPKK) are disordered. Residues 922–935 (SSKEDENEAERKNI) are compositionally biased toward basic and acidic residues. The segment covering 936-948 (SQELNMEQKNPKK) has biased composition (polar residues).

Its subcellular location is the nucleus. It is found in the chromosome. The protein resides in the cytoplasm. In terms of biological role, histone-binding protein. Binds preferentially to unmodified histone H3 but can also bind to a lesser extent to histone H3 trimethylated at 'Lys-9' (H3K9me3) as well as to histone H3 monomethylated at 'Lys-27' (H3K27ac) and trimethylated at 'Lys-27' (H3K27me3). Represses PDGFRA expression, thus playing a role in regulation of mesenchymal cell proliferation. Suppresses the expression of CDKN1A/p21 by reducing the level of trimethylation of histone H3 'Lys-4', leading to enhanced proliferation of germinal center B cells. This is PHD finger protein 14 (PHF14) from Homo sapiens (Human).